Here is an 89-residue protein sequence, read N- to C-terminus: Small ribosomal subunit protein uS14 (89 aa).

This sequence belongs to the universal ribosomal protein uS14 family. As to quaternary structure, part of the 30S ribosomal subunit. Contacts proteins S3 and S10.

Binds 16S rRNA, required for the assembly of 30S particles and may also be responsible for determining the conformation of the 16S rRNA at the A site. This Latilactobacillus sakei subsp. sakei (strain 23K) (Lactobacillus sakei subsp. sakei) protein is Small ribosomal subunit protein uS14.